The chain runs to 200 residues: Large ribosomal subunit protein uL4 (200 aa).

The segment at 42–65 is disordered; that stretch reads TRAQKTRSEVSGGGAKPWRQKGTG.

Belongs to the universal ribosomal protein uL4 family. As to quaternary structure, part of the 50S ribosomal subunit.

One of the primary rRNA binding proteins, this protein initially binds near the 5'-end of the 23S rRNA. It is important during the early stages of 50S assembly. It makes multiple contacts with different domains of the 23S rRNA in the assembled 50S subunit and ribosome. Functionally, forms part of the polypeptide exit tunnel. The polypeptide is Large ribosomal subunit protein uL4 (Vibrio parahaemolyticus serotype O3:K6 (strain RIMD 2210633)).